A 450-amino-acid polypeptide reads, in one-letter code: Sulfide:quinone oxidoreductase, mitochondrial (450 aa).

Residues 53-54, Glu75, Gln83, and Val118 contribute to the FAD site; that span reads SG. Lys173 carries the N6-acetyllysine modification. The active-site Cysteine persulfide intermediate is Cys201. The cysteines at positions 201 and 379 are disulfide-linked. FAD is bound at residue Asp336. Ser343 carries the phosphoserine modification. FAD is bound at residue 344-347; sequence KTAA. Cys379 serves as the catalytic Cysteine persulfide intermediate.

The protein belongs to the SQRD family. Requires FAD as cofactor.

The protein resides in the mitochondrion. The catalysed reaction is ubiquinone-10 + hydrogen sulfide + sulfite + 2 H(+) = ubiquinol-10 + thiosulfate. It catalyses the reaction a quinone + hydrogen sulfide + glutathione + H(+) = S-sulfanylglutathione + a quinol. The enzyme catalyses ubiquinone-10 + hydrogen sulfide + glutathione + H(+) = S-sulfanylglutathione + ubiquinol-10. In terms of biological role, catalyzes the oxidation of hydrogen sulfide with the help of a quinone, such as ubiquinone-10, giving rise to thiosulfate and ultimately to sulfane (molecular sulfur) atoms. Requires an additional electron acceptor; can use sulfite, sulfide or cyanide (in vitro). It is believed the in vivo electron acceptor is glutathione. This Homo sapiens (Human) protein is Sulfide:quinone oxidoreductase, mitochondrial.